Here is a 140-residue protein sequence, read N- to C-terminus: Large ribosomal subunit protein bL17 (140 aa).

The protein belongs to the bacterial ribosomal protein bL17 family. Part of the 50S ribosomal subunit. Contacts protein L32.

The sequence is that of Large ribosomal subunit protein bL17 from Rhizobium johnstonii (strain DSM 114642 / LMG 32736 / 3841) (Rhizobium leguminosarum bv. viciae).